Reading from the N-terminus, the 339-residue chain is MFYKIAQKFMFQMDPELAHNLAIGSLKSTGNSPLNCFYAQNIKPAPVTMMGLTFPNPVGLAAGMDKDGECIDAFHAMGFGHIEVGTVTPRPQPGNDKPRCFRLKPAKAIINRMGFNNKGVDNLVENLKAVKTNAMVGVNIGKNKDTPVEQGKDDYLICMDKVYPYAAYIAVNISSPNTPGLRSLQYGDLLDDLLGSLKQKQKELAEKHGKYVPIALKIAPDLSSEEIEKIAEALIKSEFDAAIATNTTLTRDGVSGLLNANEAGGLSGKPLNSLSTIVIKQLADCLKGKLPIIGVGGINAAEDALDKLDAGAEMVQIFSGFIYQGPKLIKDIVEAYRIK.

FMN is bound by residues 62-66 and Thr86; that span reads AGMDK. Lys66 serves as a coordination point for substrate. Residue 111 to 115 coordinates substrate; it reads NRMGF. 2 residues coordinate FMN: Asn139 and Asn172. Asn172 contributes to the substrate binding site. Residue Ser175 is the Nucleophile of the active site. Asn177 contributes to the substrate binding site. Residues Lys217 and Thr245 each coordinate FMN. Residue 246-247 participates in substrate binding; it reads NT. FMN contacts are provided by residues Gly268, Gly297, and 318-319; that span reads FS.

This sequence belongs to the dihydroorotate dehydrogenase family. Type 2 subfamily. As to quaternary structure, monomer. It depends on FMN as a cofactor.

The protein resides in the cell membrane. The enzyme catalyses (S)-dihydroorotate + a quinone = orotate + a quinol. It functions in the pathway pyrimidine metabolism; UMP biosynthesis via de novo pathway; orotate from (S)-dihydroorotate (quinone route): step 1/1. Its function is as follows. Catalyzes the conversion of dihydroorotate to orotate with quinone as electron acceptor. The sequence is that of Dihydroorotate dehydrogenase (quinone) from Shewanella halifaxensis (strain HAW-EB4).